We begin with the raw amino-acid sequence, 304 residues long: D-alanine--D-alanine ligase (304 aa).

The ATP-grasp domain occupies 103 to 299; the sequence is KLIWQALGLP…FADLCIEILK (197 aa). Residue 129–184 participates in ATP binding; that stretch reads EEKLGLPMFVKPAAEGSSVGVVKVKGKGRLKSVYEELKHLQGEIIAERFIGGGEYS. Mg(2+) contacts are provided by Asp-253, Glu-266, and Asn-268.

The protein belongs to the D-alanine--D-alanine ligase family. The cofactor is Mg(2+). It depends on Mn(2+) as a cofactor.

It is found in the cytoplasm. The catalysed reaction is 2 D-alanine + ATP = D-alanyl-D-alanine + ADP + phosphate + H(+). The protein operates within cell wall biogenesis; peptidoglycan biosynthesis. In terms of biological role, cell wall formation. The sequence is that of D-alanine--D-alanine ligase from Neisseria meningitidis serogroup B (strain ATCC BAA-335 / MC58).